The primary structure comprises 248 residues: NH(3)-dependent NAD(+) synthetase (248 aa).

30 to 37 (GLSGGIDS) serves as a coordination point for ATP. Residue D36 participates in Mg(2+) binding. Residue R114 coordinates deamido-NAD(+). ATP is bound at residue T134. E139 is a binding site for Mg(2+). Deamido-NAD(+) is bound by residues K147 and D154. K163 and T185 together coordinate ATP. 232-233 (HK) contacts deamido-NAD(+).

It belongs to the NAD synthetase family. As to quaternary structure, homodimer.

The enzyme catalyses deamido-NAD(+) + NH4(+) + ATP = AMP + diphosphate + NAD(+) + H(+). It functions in the pathway cofactor biosynthesis; NAD(+) biosynthesis; NAD(+) from deamido-NAD(+) (ammonia route): step 1/1. Functionally, catalyzes the ATP-dependent amidation of deamido-NAD to form NAD. Uses ammonia as a nitrogen source. The polypeptide is NH(3)-dependent NAD(+) synthetase (Mycoplasma genitalium (strain ATCC 33530 / DSM 19775 / NCTC 10195 / G37) (Mycoplasmoides genitalium)).